Reading from the N-terminus, the 331-residue chain is Major outer membrane protein P.IB (331 aa).

The N-terminal stretch at 1–19 (MKKSLIALTLAALPVAAMA) is a signal peptide.

This sequence belongs to the Gram-negative porin family. In terms of assembly, homotrimer.

The protein localises to the cell outer membrane. Its function is as follows. Serves as a slightly cation selective porin. The protein is Major outer membrane protein P.IB (porB) of Neisseria meningitidis serogroup B.